The following is a 213-amino-acid chain: Riboflavin/roseoflavin transporter RibM (213 aa).

The next 5 membrane-spanning stretches (helical) occupy residues 15–35 (HIIW…ALGF), 38–58 (SLWT…AFYG), 107–129 (IAAA…SLSW), 136–158 (YIFV…FWFA), and 171–193 (FANG…LWGM).

It belongs to the nicotinamide ribonucleoside (NR) uptake permease (TC 4.B.1) family.

It localises to the cell membrane. Its function is as follows. Transports riboflavin and roseoflavin. Can also transport FMN and FAD. May confer roseoflavin resistance to S.davawensis, which naturally produces this antibiotic during stationary growth phase. The protein is Riboflavin/roseoflavin transporter RibM of Streptomyces davaonensis (strain DSM 101723 / JCM 4913 / KCC S-0913 / 768).